The chain runs to 563 residues: Endoglucanase B (563 aa).

A signal peptide (or 31) is located at residues 1 to 27; that stretch reads MKKFLVLLIALIMIATLLVVPGVQTSA. E204 (proton donor) is an active-site residue. E363 serves as the catalytic Nucleophile. Positions 476 to 495 are disordered; sequence SVTPSPSATPSPTTITAPPT. In terms of domain architecture, Dockerin spans 496-562; that stretch reads DTVTYGDVNG…VLRSISELPY (67 aa).

This sequence belongs to the glycosyl hydrolase 5 (cellulase A) family.

It catalyses the reaction Endohydrolysis of (1-&gt;4)-beta-D-glucosidic linkages in cellulose, lichenin and cereal beta-D-glucans.. In terms of biological role, this enzyme catalyzes the endohydrolysis of 1,4-beta-glucosidic linkages in cellulose, lichenin and cereal beta-D-glucans. This is Endoglucanase B (celB) from Acetivibrio thermocellus (strain ATCC 27405 / DSM 1237 / JCM 9322 / NBRC 103400 / NCIMB 10682 / NRRL B-4536 / VPI 7372) (Clostridium thermocellum).